Reading from the N-terminus, the 235-residue chain is Octanoyltransferase (235 aa).

Residues 52-229 form the BPL/LPL catalytic domain; sequence KNRQASMIFC…SICSALEYIN (178 aa). Substrate contacts are provided by residues 89-96, 159-161, and 172-174; these read RGGKITWH, AIG, and GFA. Cys-190 serves as the catalytic Acyl-thioester intermediate.

Belongs to the LipB family.

It is found in the cytoplasm. The enzyme catalyses octanoyl-[ACP] + L-lysyl-[protein] = N(6)-octanoyl-L-lysyl-[protein] + holo-[ACP] + H(+). The protein operates within protein modification; protein lipoylation via endogenous pathway; protein N(6)-(lipoyl)lysine from octanoyl-[acyl-carrier-protein]: step 1/2. In terms of biological role, catalyzes the transfer of endogenously produced octanoic acid from octanoyl-acyl-carrier-protein onto the lipoyl domains of lipoate-dependent enzymes. Lipoyl-ACP can also act as a substrate although octanoyl-ACP is likely to be the physiological substrate. This chain is Octanoyltransferase, found in Tropheryma whipplei (strain Twist) (Whipple's bacillus).